We begin with the raw amino-acid sequence, 116 residues long: uncharacterized protein (116 aa).

This is an uncharacterized protein from Saccharomyces cerevisiae (strain ATCC 204508 / S288c) (Baker's yeast).